The following is a 129-amino-acid chain: Glycine cleavage system H protein (129 aa).

The Lipoyl-binding domain maps to 24–106 (TFTVGISEHA…YGDGWLFRIK (83 aa)). K65 bears the N6-lipoyllysine mark.

The protein belongs to the GcvH family. As to quaternary structure, the glycine cleavage system is composed of four proteins: P, T, L and H. (R)-lipoate serves as cofactor.

In terms of biological role, the glycine cleavage system catalyzes the degradation of glycine. The H protein shuttles the methylamine group of glycine from the P protein to the T protein. This chain is Glycine cleavage system H protein, found in Pseudoalteromonas atlantica (strain T6c / ATCC BAA-1087).